The sequence spans 425 residues: Serine--tRNA ligase (425 aa).

230–232 (TAE) contributes to the L-serine binding site. 261–263 (RSE) is a binding site for ATP. Glutamate 284 provides a ligand contact to L-serine. Residue 348-351 (EISS) coordinates ATP. Serine 384 contributes to the L-serine binding site.

It belongs to the class-II aminoacyl-tRNA synthetase family. Type-1 seryl-tRNA synthetase subfamily. In terms of assembly, homodimer. The tRNA molecule binds across the dimer.

Its subcellular location is the cytoplasm. It catalyses the reaction tRNA(Ser) + L-serine + ATP = L-seryl-tRNA(Ser) + AMP + diphosphate + H(+). It carries out the reaction tRNA(Sec) + L-serine + ATP = L-seryl-tRNA(Sec) + AMP + diphosphate + H(+). Its pathway is aminoacyl-tRNA biosynthesis; selenocysteinyl-tRNA(Sec) biosynthesis; L-seryl-tRNA(Sec) from L-serine and tRNA(Sec): step 1/1. In terms of biological role, catalyzes the attachment of serine to tRNA(Ser). Is also able to aminoacylate tRNA(Sec) with serine, to form the misacylated tRNA L-seryl-tRNA(Sec), which will be further converted into selenocysteinyl-tRNA(Sec). This is Serine--tRNA ligase from Streptococcus pyogenes serotype M3 (strain SSI-1).